Reading from the N-terminus, the 57-residue chain is UPF0391 membrane protein RPC_2356 (57 aa).

The next 2 helical transmembrane spans lie at 6–26 and 35–55; these read WALI…TGIS and ILFY…LTIF.

The protein belongs to the UPF0391 family.

It localises to the cell membrane. This is UPF0391 membrane protein RPC_2356 from Rhodopseudomonas palustris (strain BisB18).